We begin with the raw amino-acid sequence, 116 residues long: Putative UPF0320 protein YJR162C (116 aa).

Belongs to the UPF0320 family.

This is Putative UPF0320 protein YJR162C from Saccharomyces cerevisiae (strain ATCC 204508 / S288c) (Baker's yeast).